The primary structure comprises 214 residues: Protein PAM68, chloroplastic (214 aa).

Disordered regions lie at residues methionine 1–glutamine 26 and alanine 62–valine 111. The N-terminal 35 residues, methionine 1–arginine 35, are a transit peptide targeting the chloroplast. Over aspartate 36–methionine 124 the chain is Stromal. Basic residues predominate over residues lysine 75 to lysine 84. Positions serine 89 to glutamate 106 are enriched in acidic residues. The helical transmembrane segment at glycine 125–leucine 145 threads the bilayer. At lysine 146–aspartate 152 the chain is on the lumenal, thylakoid side. Residues valine 153 to valine 173 form a helical membrane-spanning segment. Residues serine 174–arginine 214 are Stromal-facing.

As to quaternary structure, interacts with the PSII subunits psbA, psbB, psbC, psbD, psbH and psbI, but not with psbE, psbF or psbO. Interacts with the PSII assembly factors HCF136, LPA1, LPA2 and ALB3.

The protein localises to the plastid. The protein resides in the chloroplast thylakoid membrane. Involved in early steps in photosystem II (PSII) biogenesis and in maturation and stability of newly synthesized psbA protein. This chain is Protein PAM68, chloroplastic (PAM68), found in Arabidopsis thaliana (Mouse-ear cress).